The chain runs to 336 residues: Polyprenyl transferase dpasC (336 aa).

Residues 34–54 (LFTIFAGGMFLFVASFPTTAF) traverse the membrane as a helical segment. Residue asparagine 66 is glycosylated (N-linked (GlcNAc...) asparagine). Transmembrane regions (helical) follow at residues 80–100 (ALCL…NDWI), 125–145 (QAML…HFML), 181–201 (YILG…IFHG), 205–225 (FAES…WTIF), 253–273 (HVHL…PMYL), 274–294 (NQFH…LSLL), and 311–331 (LHVD…IELL).

It belongs to the UbiA prenyltransferase family. Mg(2+) serves as cofactor.

It is found in the membrane. It participates in secondary metabolite biosynthesis; terpenoid biosynthesis. Functionally, polyprenyl transferase; part of the gene cluster that mediates the biosynthesis of the diterpenoid pyrones subglutinols A and B. The first step of the pathway is the synthesis of the alpha-pyrone moiety by the polyketide synthase dpasA via condensation of one acetyl-CoA starter unit with 3 malonyl-CoA units and 2 methylations. The alpha-pyrone is then combined with geranylgeranyl pyrophosphate (GGPP) formed by the GGPP synthase dpasD through the action of the prenyltransferase dpasC to yield a linear alpha-pyrone diterpenoid. Subsequent steps in the diterpenoid pyrone biosynthetic pathway involve the decalin core formation, which is initiated by the epoxidation of the C10-C11 olefin by the FAD-dependent oxidoreductase dpasE, and is followed by a cyclization cascade catalyzed by the terpene cyclase dpasB. The FAD-linked oxidoreductase dpasF is then involved in tetrahydrofuran (THF) ring formation at the C5 unit to complete the formation of subglutinols A and B. DpasF possesses also an additional catalytic ability of multi-step oxidations to generate a new DDP analog with an enone system at the C5 named FDDP A. This Apiospora sacchari (Arthrinium sacchari) protein is Polyprenyl transferase dpasC.